The primary structure comprises 507 residues: GMP synthase [glutamine-hydrolyzing] (507 aa).

The region spanning 4 to 193 (KIIILDFGSQ…VVDVCGCKQD (190 aa)) is the Glutamine amidotransferase type-1 domain. Cysteine 79 serves as the catalytic Nucleophile. Catalysis depends on residues histidine 167 and glutamate 169. The region spanning 194–382 (WSPASFIEST…LGMPEHLITR (189 aa)) is the GMPS ATP-PPase domain. Residue 221-227 (SGGVDSS) coordinates ATP.

In terms of assembly, homodimer.

The enzyme catalyses XMP + L-glutamine + ATP + H2O = GMP + L-glutamate + AMP + diphosphate + 2 H(+). Its pathway is purine metabolism; GMP biosynthesis; GMP from XMP (L-Gln route): step 1/1. In terms of biological role, catalyzes the synthesis of GMP from XMP. This Bacteroides fragilis (strain ATCC 25285 / DSM 2151 / CCUG 4856 / JCM 11019 / LMG 10263 / NCTC 9343 / Onslow / VPI 2553 / EN-2) protein is GMP synthase [glutamine-hydrolyzing].